Consider the following 548-residue polypeptide: MDSQRNLLVIALLFVSFMIWQAWEQDKNPQPQAQQTTQTTTTAAGSAADQGVPASGQGKLISVKTDVLDLTINTRGGDVEQALLPAYPKELNSTQPFQLLETSPQFIYQAQSGLTGRDGPDNPANGPRPLYNVEKDAYVLAEGQNELQVPMTYTDAAGNTFTKTFVLKRGDYAVNVNYNVQNAGEKPLEISTFGQLKQSITLPPHLDTGSSNFALHTFRGAAYSTPDEKYEKYKFDTIADNENLNISSKGGWVAMLQQYFATAWIPHNDGTNNFYTANLGNGIAAIGYKSQPVLVQPGQTGAMNSTLWVGPEIQDKMAAVAPHLDLTVDYGWLWFISQPLFKLLKWIHSFVGNWGFSIIIITFIVRGIMYPLTKTQYTSMAKMRMLQPKIQAMRERLGDDKQRISQEMMALYKAEKVNPLGGCFPLLIQMPIFLALYYMLMGSVELRQAPFALWIHDLSAQDPYYILPILMGVTMFFIQKMSPTTVTDPMQQKIMTFMPVIFTVFFLWFPSGLVLYYIVSNLVTIIQQQLIYRGLEKRGLHSREKKKS.

The chain crosses the membrane as a helical span at residues 6 to 26 (NLLVIALLFVSFMIWQAWEQD). Residues 28 to 55 (NPQPQAQQTTQTTTTAAGSAADQGVPAS) form a disordered region. Positions 30–50 (QPQAQQTTQTTTTAAGSAADQ) are enriched in low complexity. 4 helical membrane passes run 350–370 (FVGNWGFSIIIITFIVRGIMY), 420–440 (LGGCFPLLIQMPIFLALYYML), 458–478 (LSAQDPYYILPILMGVTMFFI), and 499–519 (PVIFTVFFLWFPSGLVLYYIV).

It belongs to the OXA1/ALB3/YidC family. Type 1 subfamily. In terms of assembly, interacts with the Sec translocase complex via SecD. Specifically interacts with transmembrane segments of nascent integral membrane proteins during membrane integration.

It localises to the cell inner membrane. Required for the insertion and/or proper folding and/or complex formation of integral membrane proteins into the membrane. Involved in integration of membrane proteins that insert both dependently and independently of the Sec translocase complex, as well as at least some lipoproteins. Aids folding of multispanning membrane proteins. The sequence is that of Membrane protein insertase YidC from Shigella boydii serotype 18 (strain CDC 3083-94 / BS512).